Consider the following 288-residue polypeptide: Ras-like protein 1 (288 aa).

GTP is bound at residue 11-18 (GGGGVGKS). Residues 33-41 (YDPTIEDSY) carry the Effector region motif. GTP-binding positions include 58–62 (DTAGQ) and 117–120 (NKCD). A disordered region spans residues 176–288 (EKQQQQQQQQ…KSKNGCCVIV (113 aa)). 2 stretches are compositionally biased toward low complexity: residues 178-216 (QQQQ…NNNN) and 246-281 (PNQS…SKSK). Residue cysteine 284 is the site of S-palmitoyl cysteine attachment. Cysteine methyl ester is present on cysteine 285. Cysteine 285 carries the S-farnesyl cysteine lipid modification. Residues 286-288 (VIV) constitute a propeptide, removed in mature form.

The protein belongs to the small GTPase superfamily. Ras family.

The protein localises to the cell membrane. It catalyses the reaction GTP + H2O = GDP + phosphate + H(+). Alternates between an inactive form bound to GDP and an active form bound to GTP. Activated by a guanine nucleotide-exchange factor (GEF) and inactivated by a GTPase-activating protein (GAP). Required for the regulation of both a MAP kinase signaling pathway and a cAMP signaling pathway. The activation of these pathways contributes to the pathogenicity of the cells through the induction of the morphological transition from the yeast to the polarized filamentous form. The chain is Ras-like protein 1 (RAS1) from Candida albicans (strain WO-1) (Yeast).